Consider the following 335-residue polypeptide: tRNA-dihydrouridine(20/20a) synthase (335 aa).

Residues 19 to 21 (PMM) and glutamine 72 each bind FMN. The active-site Proton donor is the cysteine 102. Residues lysine 141, histidine 173, 213–215 (NGG), and 235–236 (GR) contribute to the FMN site.

The protein belongs to the Dus family. DusA subfamily. FMN serves as cofactor.

It catalyses the reaction 5,6-dihydrouridine(20) in tRNA + NADP(+) = uridine(20) in tRNA + NADPH + H(+). The enzyme catalyses 5,6-dihydrouridine(20) in tRNA + NAD(+) = uridine(20) in tRNA + NADH + H(+). It carries out the reaction 5,6-dihydrouridine(20a) in tRNA + NADP(+) = uridine(20a) in tRNA + NADPH + H(+). The catalysed reaction is 5,6-dihydrouridine(20a) in tRNA + NAD(+) = uridine(20a) in tRNA + NADH + H(+). Functionally, catalyzes the synthesis of 5,6-dihydrouridine (D), a modified base found in the D-loop of most tRNAs, via the reduction of the C5-C6 double bond in target uridines. Specifically modifies U20 and U20a in tRNAs. This is tRNA-dihydrouridine(20/20a) synthase from Xanthomonas campestris pv. campestris (strain ATCC 33913 / DSM 3586 / NCPPB 528 / LMG 568 / P 25).